Reading from the N-terminus, the 253-residue chain is MRLKGVLALFSFFTAIPIKSNASLEEIAEYSYISPLIIGISLALIESAVYVLLYRILEALAGIVLLGVVELLRGFNHLDGLLDLGDALMIKGDRERKIKALKDVEIGSGGIGLLLVYLSIQIVALLKLGFSFYTIFYLISSNVLSMTIGLYILSTISPIPESNLGKIFHNKLKGKSTVLLFELIPFISLYNIIVFLVFYMIMHKICRSLGGSSGDIAGASITLSFPLFLLTNEITNLNYSLLSILCYLFLYLH.

Helical transmembrane passes span 33 to 53, 56 to 76, 106 to 126, 132 to 152, 178 to 198, 209 to 229, and 233 to 253; these read ISPL…YVLL, ILEA…RGFN, IGSG…VALL, FYTI…GLYI, VLLF…FLVF, LGGS…PLFL, and EITN…LYLH.

This sequence belongs to the CobS family. It depends on Mg(2+) as a cofactor.

It localises to the cell membrane. The enzyme catalyses alpha-ribazole + adenosylcob(III)inamide-GDP = adenosylcob(III)alamin + GMP + H(+). The catalysed reaction is alpha-ribazole 5'-phosphate + adenosylcob(III)inamide-GDP = adenosylcob(III)alamin 5'-phosphate + GMP + H(+). The protein operates within cofactor biosynthesis; adenosylcobalamin biosynthesis; adenosylcobalamin from cob(II)yrinate a,c-diamide: step 7/7. In terms of biological role, joins adenosylcobinamide-GDP and alpha-ribazole to generate adenosylcobalamin (Ado-cobalamin). Also synthesizes adenosylcobalamin 5'-phosphate from adenosylcobinamide-GDP and alpha-ribazole 5'-phosphate. This chain is Adenosylcobinamide-GDP ribazoletransferase, found in Saccharolobus islandicus (strain M.16.27) (Sulfolobus islandicus).